The chain runs to 338 residues: 3-dehydroquinate synthase (338 aa).

NAD(+) is bound by residues 58 to 63 (DGERAK), 92 to 96 (GTTGD), 116 to 117 (TT), Lys129, and Lys138. Zn(2+)-binding residues include Glu169, His229, and His245.

This sequence belongs to the sugar phosphate cyclases superfamily. Dehydroquinate synthase family. NAD(+) is required as a cofactor. It depends on Co(2+) as a cofactor. Requires Zn(2+) as cofactor.

Its subcellular location is the cytoplasm. The enzyme catalyses 7-phospho-2-dehydro-3-deoxy-D-arabino-heptonate = 3-dehydroquinate + phosphate. It participates in metabolic intermediate biosynthesis; chorismate biosynthesis; chorismate from D-erythrose 4-phosphate and phosphoenolpyruvate: step 2/7. Its function is as follows. Catalyzes the conversion of 3-deoxy-D-arabino-heptulosonate 7-phosphate (DAHP) to dehydroquinate (DHQ). In Picrophilus torridus (strain ATCC 700027 / DSM 9790 / JCM 10055 / NBRC 100828 / KAW 2/3), this protein is 3-dehydroquinate synthase.